Here is a 64-residue protein sequence, read N- to C-terminus: PYLa/PGLa B (64 aa).

The signal sequence occupies residues 1 to 20 (MYKQIFLCLIIAALCATIMA). The propeptide occupies 21–35 (EASALADADDDDDKR). At L59 the chain carries Leucine amide. Positions 60–64 (GRRDS) are excised as a propeptide.

Belongs to the gastrin/cholecystokinin family. Magainin subfamily. In terms of tissue distribution, expressed by the skin glands. Synthesized in the stomach and stored in a novel granular multinucleated cell in the gastric mucosa. Stored as active, processed peptides in large granules within the granular gland secretions of the skin.

Its subcellular location is the secreted. Functionally, PGLa and PGLa-H display a broad-spectrum of antibacterial activity against a range of Gram-positive and Gram-negative bacteria. PGLa also displays antifungal activity against C.albicans ATCC 14053. PGLa-H shows moderate antibacterial activity against the multidrug-resistant methicillin-resistant S.aureus (MRSA) but exhibits very little hemolytic activity. The sequence is that of PYLa/PGLa B (pgla-b) from Xenopus laevis (African clawed frog).